We begin with the raw amino-acid sequence, 336 residues long: Nicotinate-nucleotide--dimethylbenzimidazole phosphoribosyltransferase (336 aa).

The active-site Proton acceptor is glutamate 304.

This sequence belongs to the CobT family.

The enzyme catalyses 5,6-dimethylbenzimidazole + nicotinate beta-D-ribonucleotide = alpha-ribazole 5'-phosphate + nicotinate + H(+). The protein operates within nucleoside biosynthesis; alpha-ribazole biosynthesis; alpha-ribazole from 5,6-dimethylbenzimidazole: step 1/2. In terms of biological role, catalyzes the synthesis of alpha-ribazole-5'-phosphate from nicotinate mononucleotide (NAMN) and 5,6-dimethylbenzimidazole (DMB). In Mesorhizobium japonicum (strain LMG 29417 / CECT 9101 / MAFF 303099) (Mesorhizobium loti (strain MAFF 303099)), this protein is Nicotinate-nucleotide--dimethylbenzimidazole phosphoribosyltransferase.